A 986-amino-acid chain; its full sequence is Zinc finger protein 445 (986 aa).

Residues arginine 52–leucine 134 enclose the SCAN box domain. The KRAB domain occupies leucine 219–aspartate 289. Glycyl lysine isopeptide (Lys-Gly) (interchain with G-Cter in SUMO2) cross-links involve residues lysine 302, lysine 360, and lysine 385. Residues glutamine 433–arginine 460 form a disordered region. Positions glutamate 439–arginine 460 are enriched in basic and acidic residues. 2 C2H2-type zinc fingers span residues phenylalanine 470–histidine 492 and tyrosine 498–histidine 520. Residue lysine 524 forms a Glycyl lysine isopeptide (Lys-Gly) (interchain with G-Cter in SUMO2) linkage. C2H2-type zinc fingers lie at residues leucine 553–histidine 575 and tyrosine 581–histidine 604. A Glycyl lysine isopeptide (Lys-Gly) (interchain with G-Cter in SUMO2) cross-link involves residue lysine 609. C2H2-type zinc fingers lie at residues phenylalanine 634–histidine 656 and tyrosine 662–histidine 686. Residue lysine 691 forms a Glycyl lysine isopeptide (Lys-Gly) (interchain with G-Cter in SUMO2) linkage. C2H2-type zinc fingers lie at residues asparagine 718–histidine 740, tyrosine 746–histidine 768, phenylalanine 796–histidine 818, and phenylalanine 824–histidine 846. Lysine 929 is covalently cross-linked (Glycyl lysine isopeptide (Lys-Gly) (interchain with G-Cter in SUMO2)). C2H2-type zinc fingers lie at residues histidine 933–histidine 955 and phenylalanine 961–histidine 983.

The protein belongs to the krueppel C2H2-type zinc-finger protein family.

It localises to the nucleus. Functionally, transcription regulator required to maintain maternal and paternal gene imprinting, a process by which gene expression is restricted in a parent of origin-specific manner by epigenetic modification of genomic DNA and chromatin, including DNA methylation. Acts by controlling DNA methylation during the earliest multicellular stages of development at multiple imprinting control regions (ICRs). Acts together with ZFP57, but ZFP57 plays the predominant role in imprinting maintenance. In contrast, ZNF445 seems to be the major factor in human early embryonic imprinting maintenance. The protein is Zinc finger protein 445 (Znf445) of Mus musculus (Mouse).